Reading from the N-terminus, the 735-residue chain is F-box and leucine-rich repeat protein 13 (735 aa).

The F-box domain maps to 152–198 (KCDISLLPERAILQIFFYLSLKDVIICGQVNHAWMLMTQLNSLWNAI). LRR repeat units follow at residues 230–254 (GCLLRPKTFRSVSHCRNLQELNVSD), 255–280 (CPTFTDESMRHISEGCPGVLCLNLSN), 281–305 (TTITNRTMRLLPRHFHNLQNLSLAY), 306–333 (CRRFTDKGLQYLNLGNGCHKLIYLDLSG), 334–359 (CTQISVQGFRYIANSCTGIMHLTIND), 360–385 (MPTLTDNCVKALVEKCSRITSLVFTG), 386–406 (APHISDCTFRALSACKLRKIR), 410–435 (NKRVTDASFKFIDKNYPNLSHIYMAD), 436–460 (CKGITDSSLRSLSPLKQLTVLNLAN), 461–488 (CVRIGDMGLKQFLDGPASMRIRELNLSN), 489–514 (CVRLSDASVMKLSERCPNLNYLSLRN), 515–538 (CEHLTAQGIGYIVNIFSLVSIDLS), 539–563 (GTDISNEGLNVLSRHKKLKELSVSE), 564–589 (CYRITDDGIQAFCKSSLILEHLDVSY), 590–615 (CSQLSDMIIKALAIYCINLTSLSIAG), 616–641 (CPKITDSAMEMLSAKCHYLHILDISG), and 642–667 (CVLLTDQILEDLQIGCKQLRILKMQY). Residues 682–692 (KVQQQEYNTND) show a composition bias toward polar residues. Residues 682–703 (KVQQQEYNTNDPPRWFGYDREG) are disordered.

This sequence belongs to the DRC6 family. In terms of assembly, component of the nexin-dynein regulatory complex (N-DRC). Directly interacts with SKP1 and CUL1. Interacts with TCTE1/DRC5.

The protein localises to the cytoplasm. The protein resides in the cytoskeleton. It localises to the flagellum axoneme. Its subcellular location is the microtubule organizing center. It is found in the centrosome. Substrate-recognition component of the SCF (SKP1-CUL1-F-box protein)-type E3 ubiquitin ligase complex. Component of the nexin-dynein regulatory complex (N-DRC), a key regulator of ciliary/flagellar motility which maintains the alignment and integrity of the distal axoneme and regulates microtubule sliding in motile axonemes. Specifically targets CEP192 isoform 3 for ubiquitin-mediated proteolysis and thereby acts as a regulator of microtubule nucleation activity. This Homo sapiens (Human) protein is F-box and leucine-rich repeat protein 13 (FBXL13).